Reading from the N-terminus, the 209-residue chain is Imidazole glycerol phosphate synthase subunit HisH (209 aa).

The Glutamine amidotransferase type-1 domain occupies 1–205 (MIAIIDYGMG…KGVVETWKSS (205 aa)). The active-site Nucleophile is cysteine 79. Catalysis depends on residues histidine 180 and glutamate 182.

As to quaternary structure, heterodimer of HisH and HisF.

It localises to the cytoplasm. It catalyses the reaction 5-[(5-phospho-1-deoxy-D-ribulos-1-ylimino)methylamino]-1-(5-phospho-beta-D-ribosyl)imidazole-4-carboxamide + L-glutamine = D-erythro-1-(imidazol-4-yl)glycerol 3-phosphate + 5-amino-1-(5-phospho-beta-D-ribosyl)imidazole-4-carboxamide + L-glutamate + H(+). It carries out the reaction L-glutamine + H2O = L-glutamate + NH4(+). It participates in amino-acid biosynthesis; L-histidine biosynthesis; L-histidine from 5-phospho-alpha-D-ribose 1-diphosphate: step 5/9. In terms of biological role, IGPS catalyzes the conversion of PRFAR and glutamine to IGP, AICAR and glutamate. The HisH subunit catalyzes the hydrolysis of glutamine to glutamate and ammonia as part of the synthesis of IGP and AICAR. The resulting ammonia molecule is channeled to the active site of HisF. The polypeptide is Imidazole glycerol phosphate synthase subunit HisH (Bacillus thuringiensis subsp. konkukian (strain 97-27)).